The primary structure comprises 184 residues: Ribosome-recycling factor (184 aa).

Belongs to the RRF family.

The protein localises to the cytoplasm. Its function is as follows. Responsible for the release of ribosomes from messenger RNA at the termination of protein biosynthesis. May increase the efficiency of translation by recycling ribosomes from one round of translation to another. The polypeptide is Ribosome-recycling factor (Borrelia turicatae (strain 91E135)).